We begin with the raw amino-acid sequence, 300 residues long: Dioxygenase FUM3 (300 aa).

The Fe cation site is built by H146, D148, and H222.

It belongs to the PhyH family. Homodimer. Requires Fe cation as cofactor.

It functions in the pathway mycotoxin biosynthesis. Functionally, dioxygenase; part of the gene cluster that mediates the biosynthesis of fumonisins B1 (FB1), B2 (FB2), B3 (FB3), and B4 (FB4), which are carcinogenic mycotoxins. Within the pathway, FUM3 performs the C-5 hydroxylation present in FB1 and FB2 and which occurs late in the biosynthesis. The biosynthesis starts with the FUM1-catalyzed carbon chain assembly from one molecule of acetyl-CoA, eight molecules of malonyl-CoA, and two molecules of methionine (in S-adenosyl form). The C18 polyketide chain is released from the enzyme by a nucleophilic attack of a carbanion, which is derived from R-carbon of alanine by decarboxylation, on the carbonyl carbon of polyketide acyl chain. This step is catalyzed by the pyridoxal 5'-phosphate-dependent aminoacyl transferase FUM8. The resultant 3-keto intermediate is then stereospecifically reduced to a 3-hydroxyl product by reductase FUM13. Subsequent oxidations at C-10 by the cytochrome P450 monooxygenase FUM2, C-14 and C-15 by FUM6, FUM12 or FUM15, tricarballylic esterification of the hydroxyl groups on C-14 and C-15 by acyltransferase FUM14, and C-5 hydroxylation by 2-keto-glutarate-dependent dioxygenase FUM3 furnish the biosynthesis of fumonisins. The tricarballylic moieties are most likely derived from the citric acid cycle, and their addition to the carbon backbone may involve FUM7, FUM10, FUM11 and FUM14. This chain is Dioxygenase FUM3, found in Gibberella moniliformis (strain M3125 / FGSC 7600) (Maize ear and stalk rot fungus).